Here is a 322-residue protein sequence, read N- to C-terminus: Acetyl-coenzyme A carboxylase carboxyl transferase subunit alpha (322 aa).

The 262-residue stretch at 32 to 293 folds into the CoA carboxyltransferase C-terminal domain; sequence DISEEIARLE…KRALQDALRQ (262 aa).

This sequence belongs to the AccA family. As to quaternary structure, acetyl-CoA carboxylase is a heterohexamer composed of biotin carboxyl carrier protein (AccB), biotin carboxylase (AccC) and two subunits each of ACCase subunit alpha (AccA) and ACCase subunit beta (AccD).

It is found in the cytoplasm. It catalyses the reaction N(6)-carboxybiotinyl-L-lysyl-[protein] + acetyl-CoA = N(6)-biotinyl-L-lysyl-[protein] + malonyl-CoA. The protein operates within lipid metabolism; malonyl-CoA biosynthesis; malonyl-CoA from acetyl-CoA: step 1/1. In terms of biological role, component of the acetyl coenzyme A carboxylase (ACC) complex. First, biotin carboxylase catalyzes the carboxylation of biotin on its carrier protein (BCCP) and then the CO(2) group is transferred by the carboxyltransferase to acetyl-CoA to form malonyl-CoA. The protein is Acetyl-coenzyme A carboxylase carboxyl transferase subunit alpha of Aromatoleum aromaticum (strain DSM 19018 / LMG 30748 / EbN1) (Azoarcus sp. (strain EbN1)).